Here is a 594-residue protein sequence, read N- to C-terminus: U3 small nucleolar RNA-associated protein 18 (594 aa).

2 disordered regions span residues 48-128 (EQEM…WIDS) and 176-200 (KWVD…SNNV). 3 stretches are compositionally biased toward acidic residues: residues 49–72 (QEMD…DEAQ), 102–128 (TMDV…WIDS), and 180–196 (DESD…EEEG). Positions 101–190 (DTMDVDDEDD…ESDSELDDEE (90 aa)) are interaction with UTP21. Residues Ser182 and Ser184 each carry the phosphoserine modification. WD repeat units lie at residues 246-285 (PSHS…NHLV), 290-334 (LVGS…LTHS), 463-504 (GTTT…TSST), 513-554 (QLTT…VFSN), and 560-593 (TPLG…KLNH).

This sequence belongs to the WD repeat UTP18 family. As to quaternary structure, interacts with snoRNA U3. Interacts with MPP10, UTP21 and UTP25. Component of the ribosomal small subunit (SSU) processome composed of at least 40 protein subunits and snoRNA U3.

Its subcellular location is the nucleus. It localises to the nucleolus. Its function is as follows. Involved in nucleolar processing of pre-18S ribosomal RNA and ribosome assembly. This Saccharomyces cerevisiae (strain ATCC 204508 / S288c) (Baker's yeast) protein is U3 small nucleolar RNA-associated protein 18 (UTP18).